The sequence spans 196 residues: Signaling threshold-regulating transmembrane adapter 1 (196 aa).

A signal peptide spans 1 to 24 (MNQADPRLRAVCLWTLTSAAMSRG). Over 25 to 40 (DNCTDLLALGIPSITQ) the chain is Extracellular. Asn26 is a glycosylation site (N-linked (GlcNAc...) asparagine). Residues 41–61 (AWGLWVLLGAVTLLFLISLAA) form a helical membrane-spanning segment. At 62-196 (HLSQWTRGRS…AYANSQPAAS (135 aa)) the chain is on the cytoplasmic side. Ser80 and Ser83 each carry phosphoserine. Tyr90 is modified (phosphotyrosine). The tract at residues 90–93 (YGNL) is interaction with GRB2. Position 102 is a phosphoserine (Ser102). Residue Tyr127 is modified to Phosphotyrosine. A disordered region spans residues 132 to 167 (LRPPQGRIPGPGTPVKYSEVVLDSEPKSQASGPEPE). The residue at position 144 (Thr144) is a Phosphothreonine. An interaction with PTPN11 region spans residues 146–151 (VKYSEV). Tyr148 and Tyr169 each carry phosphotyrosine. Positions 169-172 (YASV) are interaction with CSK. Phosphoserine is present on Ser182. At Tyr188 the chain carries Phosphotyrosine. Residues 188–191 (YANS) form an interaction with GRB2 region.

As to quaternary structure, homodimer; disulfide-linked. When phosphorylated, interacts with PTPN11/SHP2, GRB2 and CSK. In terms of processing, phosphorylated on tyrosines by LCK, FYN or ZAP70 upon TCR activation; which leads to the recruitment of PTPN11, GRB2 and CSK. Specifically expressed in T- and B-cells. Present in plasma cells but not in germinal center B-cells (at protein level). Expressed in T- and B-cell lymphoma.

The protein localises to the cell membrane. Functionally, negatively regulates TCR (T-cell antigen receptor)-mediated signaling in T-cells. Involved in positive selection of T-cells. The sequence is that of Signaling threshold-regulating transmembrane adapter 1 (SIT1) from Homo sapiens (Human).